Consider the following 364-residue polypeptide: Cell cycle control protein 50A (364 aa).

The tract at residues 1–28 (MAMNYSAKDEVDGGPAGPPGGAAKTRRP) is disordered. Residue alanine 2 is modified to N-acetylalanine. The Cytoplasmic segment spans residues 2–49 (AMNYSAKDEVDGGPAGPPGGAAKTRRPDNTAFKQQRLPAWQPILTAGT). Residues 50-70 (VLPTFFIIGLIFIPIGIGIFV) form a helical membrane-spanning segment. The Exoplasmic loop segment spans residues 71-328 (TSNNIREIEI…SWMGGKNPFL (258 aa)). 3 cysteine pairs are disulfide-bonded: cysteine 91-cysteine 104, cysteine 94-cysteine 102, and cysteine 157-cysteine 171. A glycan (N-linked (GlcNAc...) asparagine) is linked at asparagine 98. A glycan (N-linked (GlcNAc...) asparagine) is linked at asparagine 297. A helical transmembrane segment spans residues 329-349 (GIAYITIGSISFLLGVVLLVI). Residues 350-364 (NHKYRNSSNTADITI) lie on the Cytoplasmic side of the membrane.

Belongs to the CDC50/LEM3 family. As to quaternary structure, component of various P4-ATPase flippase complexes which consists of a catalytic alpha subunit and an accessory beta subunit. Interacts with ATP8A1 to form a flippase complex; this complex forms an intermediate phosphoenzyme. The ATP8A2:TMEM30A flippase complex has been purified, and ATP8B1:TMEM30A and ATP8B2:TMEM30A flippase complexes have been shown to form intermediate phosphoenzymes in vitro. Interacts with alpha subunits ATP8A1, ATP8B1, ATP8B2, ATP8B4, ATP10A, ATP10B, ATP10D, ATP11A, ATP11B and ATP11C. N-glycosylated. Contains high mannose-type oligosaccharides. In terms of tissue distribution, expressed in photoreceptor cells; detected in retina outer segment (at protein level). Detected in hepatocytes liver sinusoidal endothelial cells and kidney brush border of the proximal tubules (at protein level). Expressed in brain (at protein level).

The protein localises to the membrane. It localises to the cell membrane. Its subcellular location is the golgi apparatus. It is found in the cytoplasmic vesicle. The protein resides in the secretory vesicle membrane. The protein localises to the apical cell membrane. Accessory component of a P4-ATPase flippase complex which catalyzes the hydrolysis of ATP coupled to the transport of aminophospholipids from the outer to the inner leaflet of various membranes and ensures the maintenance of asymmetric distribution of phospholipids. Phospholipid translocation also seems to be implicated in vesicle formation and in uptake of lipid signaling molecules. The beta subunit may assist in binding of the phospholipid substrate. Required for the proper folding, assembly and ER to Golgi exit of the ATP8A2:TMEM30A flippase complex. ATP8A2:TMEM30A may be involved in regulation of neurite outgrowth, and, reconstituted to liposomes, predomiminantly transports phosphatidylserine (PS) and to a lesser extent phosphatidylethanolamine (PE). The ATP8A1:TMEM30A flippase complex seems to play a role in regulation of cell migration probably involving flippase-mediated translocation of phosphatidylethanolamine (PE) at the plasma membrane. Required for the formation of the ATP8A2, ATP8B1 and ATP8B2 P-type ATPAse intermediate phosphoenzymes. Involved in uptake of platelet-activating factor (PAF). Can also mediate the export of alpha subunits ATP8A1, ATP8B1, ATP8B2, ATP8B4, ATP10A, ATP10B, ATP10D, ATP11A, ATP11B and ATP11C from the ER to other membrane localizations. The chain is Cell cycle control protein 50A from Mus musculus (Mouse).